The chain runs to 186 residues: Dihydrofolate reductase (186 aa).

One can recognise a DHFR domain in the interval 2–180 (RLNVVVAVSE…FTFKFCVYDV (179 aa)). NADP(+) is bound by residues A8 and 14 to 20 (GIGKGGG). 28–33 (DMEFFK) provides a ligand contact to substrate. NADP(+) is bound at residue 51 to 53 (RVT). R67 serves as a coordination point for substrate. NADP(+)-binding positions include 73-75 (SST) and 112-119 (GGYRLYKE).

It belongs to the dihydrofolate reductase family. As to quaternary structure, monomer.

It carries out the reaction (6S)-5,6,7,8-tetrahydrofolate + NADP(+) = 7,8-dihydrofolate + NADPH + H(+). It participates in cofactor biosynthesis; tetrahydrofolate biosynthesis; 5,6,7,8-tetrahydrofolate from 7,8-dihydrofolate: step 1/1. Its function is as follows. Key enzyme in folate metabolism. Contributes to the de novo mitochondrial thymidylate biosynthesis pathway. Catalyzes an essential reaction for de novo glycine and purine synthesis, and for DNA precursor synthesis. This Schistosoma mansoni (Blood fluke) protein is Dihydrofolate reductase.